Here is a 24-residue protein sequence, read N- to C-terminus: Humanin-like 1 (24 aa).

This sequence belongs to the humanin family. In terms of tissue distribution, highly expressed in the kidney, heart muscle and testis.

The protein localises to the secreted. Its subcellular location is the cytoplasm. In terms of biological role, plays a role as a neuroprotective and antiapoptotic factor. The polypeptide is Humanin-like 1 (Homo sapiens (Human)).